Consider the following 219-residue polypeptide: Large ribosomal subunit protein uL1 (219 aa).

Belongs to the universal ribosomal protein uL1 family. Part of the 50S ribosomal subunit.

Binds directly to 23S rRNA. Probably involved in E site tRNA release. In terms of biological role, protein L1 is also a translational repressor protein, it controls the translation of its operon by binding to its mRNA. The chain is Large ribosomal subunit protein uL1 from Pyrococcus horikoshii (strain ATCC 700860 / DSM 12428 / JCM 9974 / NBRC 100139 / OT-3).